A 260-amino-acid chain; its full sequence is Hydroxyethylthiazole kinase (260 aa).

Methionine 36 contacts substrate. Positions 112 and 157 each coordinate ATP. Substrate is bound at residue glycine 184.

This sequence belongs to the Thz kinase family. Requires Mg(2+) as cofactor.

It catalyses the reaction 5-(2-hydroxyethyl)-4-methylthiazole + ATP = 4-methyl-5-(2-phosphooxyethyl)-thiazole + ADP + H(+). The protein operates within cofactor biosynthesis; thiamine diphosphate biosynthesis; 4-methyl-5-(2-phosphoethyl)-thiazole from 5-(2-hydroxyethyl)-4-methylthiazole: step 1/1. Functionally, catalyzes the phosphorylation of the hydroxyl group of 4-methyl-5-beta-hydroxyethylthiazole (THZ). The sequence is that of Hydroxyethylthiazole kinase from Shouchella clausii (strain KSM-K16) (Alkalihalobacillus clausii).